The primary structure comprises 506 residues: Serine/threonine-protein kinase RIO1 (506 aa).

The segment at 22 to 52 is disordered; it reads TASSSSDDEPEQAVVKQEKLEAGEQIEEQYD. Residues 142–506 form the Protein kinase domain; that stretch reads LNIDGCISTG…KKRAHRQHMK (365 aa). ATP contacts are provided by residues 148–156, lysine 169, and leucine 241; that span reads ISTGKEANV. Catalysis depends on aspartate 285, which acts as the Proton acceptor. An ATP-binding site is contributed by asparagine 290. Residues asparagine 290 and aspartate 302 each contribute to the Mg(2+) site. The active-site 4-aspartylphosphate intermediate is aspartate 302. Residues 418 to 506 form a disordered region; it reads GDGFGEEHDD…KKRAHRQHMK (89 aa). Acidic residues predominate over residues 424 to 435; the sequence is EHDDSDDNDDEE. A compositionally biased stretch (basic and acidic residues) spans 454–490; sequence EKERKIAMHTRNREETAEERKERKAAVKEEKREQRKE. The span at 491–506 shows a compositional bias: basic residues; sequence KIPKHLKKRAHRQHMK.

Belongs to the protein kinase superfamily. RIO-type Ser/Thr kinase family. Mg(2+) serves as cofactor. Expressed in vulva and uterine cells, uterine seam cells (utse), spermatheca and in the nervous system including chemosensory neurons in the head, nerve ring neurons (RID/RIF), inhibitory motor neurons (DA/DD/VA/VD), mechanosensory neurons (ALML/PLML) and tail sensory neurons (DVA//PDA). Also expressed in intestine and pharynx (procorpus) and rectal valve and gland.

The protein localises to the cytoplasm. The catalysed reaction is L-seryl-[protein] + ATP = O-phospho-L-seryl-[protein] + ADP + H(+). The enzyme catalyses L-threonyl-[protein] + ATP = O-phospho-L-threonyl-[protein] + ADP + H(+). Involved in the final steps of cytoplasmic maturation of the 40S ribosomal subunit. Despite the protein kinase domain is proposed to act predominantly as an ATPase. The catalytic activity regulates its dynamic association with the 40S subunit. Plays a role in oogenesis by regulating germ cell proliferation, progression through diplotene and diakinesis stages and oocyte maturation. Regulates germline development probably by regulating the phosphorylation of mpk-1. Involved in larval development. The chain is Serine/threonine-protein kinase RIO1 from Caenorhabditis elegans.